We begin with the raw amino-acid sequence, 273 residues long: NH(3)-dependent NAD(+) synthetase (273 aa).

Position 34 to 41 (34 to 41 (GLSGGIDS)) interacts with ATP. Asp-40 is a Mg(2+) binding site. Arg-116 serves as a coordination point for deamido-NAD(+). Thr-136 contacts ATP. Glu-141 contributes to the Mg(2+) binding site. The ATP site is built by Lys-165 and Ser-187.

It belongs to the NAD synthetase family. As to quaternary structure, homodimer.

It carries out the reaction deamido-NAD(+) + NH4(+) + ATP = AMP + diphosphate + NAD(+) + H(+). The protein operates within cofactor biosynthesis; NAD(+) biosynthesis; NAD(+) from deamido-NAD(+) (ammonia route): step 1/1. Catalyzes the ATP-dependent amidation of deamido-NAD to form NAD. Uses ammonia as a nitrogen source. This is NH(3)-dependent NAD(+) synthetase from Trichlorobacter lovleyi (strain ATCC BAA-1151 / DSM 17278 / SZ) (Geobacter lovleyi).